The chain runs to 279 residues: Calcium-binding protein 4 (279 aa).

The span at 1-12 shows a compositional bias: basic and acidic residues; that stretch reads MAEEQGRGRHGP. A disordered region spans residues 1 to 114; sequence MAEEQGRGRH…PGPQHDAAQR (114 aa). Phosphoserine is present on Ser42. Polar residues predominate over residues 55–65; that stretch reads GPSSSGEQTPM. 4 EF-hand domains span residues 133-168, 187-204, 210-245, and 247-279; these read EELD…LGYM, GRVD…KLRE, LGLR…LLGE, and LVGP…LSRH. The Ca(2+) site is built by Asp146, Asp148, Asp150, Tyr152, and Asp157. Residues Asp223, Asp225, Asp227, Arg229, Glu234, Asp260, Asn262, Asp264, Thr266, and Glu271 each contribute to the Ca(2+) site.

Interacts with CACNA1F and CACNA1D (via IQ domain) in a calcium independent manner. Interacts (via N-terminus) with UNC119. In terms of processing, phosphorylated. Phosphorylation levels change with the light conditions and regulate the activity. As to expression, expressed in the retina.

It is found in the cytoplasm. The protein localises to the presynapse. Its function is as follows. May play a role in normal synaptic function, probably through regulation of Ca(2+) influx and neurotransmitter release in photoreceptor synaptic terminals and in auditory transmission. Modulator of CACNA1F, shifting the activation range to more hyperpolarized voltages. In Bos taurus (Bovine), this protein is Calcium-binding protein 4 (CABP4).